The chain runs to 703 residues: Protein teflon (703 aa).

The segment at 32–55 adopts a C2H2-type 1 zinc-finger fold; the sequence is MFCHFCKDIFTHLPEFMRHLQWSH. Disordered regions lie at residues 78–111, 138–161, and 339–434; these read TSEDDVQSQANSCSSGDSGLAGEMEDADGEPGSS, SHEQSYSKTPPDSRTEGFRCARKP, and SQQP…SKLE. 2 stretches are compositionally biased toward polar residues: residues 84-94 and 138-147; these read QSQANSCSSGD and SHEQSYSKTP. Positions 148–161 are enriched in basic and acidic residues; that stretch reads PDSRTEGFRCARKP. Polar residues-rich tracts occupy residues 339–352 and 364–373; these read SQQPSELNTTNNAV and SLTVISSSPI. C2H2-type zinc fingers lie at residues 649–672 and 677–700; these read YFCECCEEIFPNEARYKKHVQSVH and FTCSECGKSFKRLYFYEKHLKTVH.

The protein belongs to the Teflon family.

Its subcellular location is the nucleus. It is found in the chromosome. Functionally, specifically required in males for proper segregation of autosomal bivalents at meiosis I. Expression is required in the male germ line prior to spermatocyte stage S4. May have a role as a bridging molecule maintaining adhesion to hold autosome bivalents together via heterochromatic connections. The sequence is that of Protein teflon from Drosophila pseudoobscura pseudoobscura (Fruit fly).